We begin with the raw amino-acid sequence, 315 residues long: Melanocyte-stimulating hormone receptor (315 aa).

Over 1-35 the chain is Extracellular; it reads MSTQEPQKSLLGSLNSNATSHLGLATNQSEPWCLY. Residues Asn17 and Asn27 are each glycosylated (N-linked (GlcNAc...) asparagine). A helical membrane pass occupies residues 36–61; sequence VSIPDGLFLSLGLVSLVENVLVVIAI. At 62–70 the chain is on the cytoplasmic side; that stretch reads TKNRNLHSP. Residues 71 to 91 form a helical membrane-spanning segment; it reads MYYFICCLALSDLMVSVSIVL. Residues 92 to 116 lie on the Extracellular side of the membrane; that stretch reads ETTIILLLEAGILVARVALVQQLDN. A helical transmembrane segment spans residues 117 to 138; it reads LIDVLICGSMVSSLCFLGIIAI. Residues 139-161 are Cytoplasmic-facing; sequence DRYISIFYALRYHSIVTLPRARR. A helical transmembrane segment spans residues 162 to 181; that stretch reads AVVGIWMVSIVSSTLFITYY. Over 182–189 the chain is Extracellular; sequence KHTAVLLC. The chain crosses the membrane as a helical span at residues 190 to 209; that stretch reads LVTFFLAMLALMAILYAHMF. Residues 210 to 238 lie on the Cytoplasmic side of the membrane; that stretch reads TRACQHAQGIAQLHKRRRSIRQGFCLKGA. The chain crosses the membrane as a helical span at residues 239–264; the sequence is ATLTILLGIFFLCWGPFFLHLLLIVL. At 265–277 the chain is on the extracellular side; it reads CPQHPTCSCIFKN. A helical membrane pass occupies residues 278–298; it reads FNLFLLLIVLSSTVDPLIYAF. Over 299 to 315 the chain is Cytoplasmic; it reads RSQELRMTLKEVLLCSW. A lipid anchor (S-palmitoyl cysteine) is attached at Cys313.

It belongs to the G-protein coupled receptor 1 family. In terms of assembly, interacts with MGRN1, but does not undergo MGRN1-mediated ubiquitination; this interaction competes with GNAS-binding and thus inhibits agonist-induced cAMP production. Interacts with OPN3; the interaction results in a decrease in MC1R-mediated cAMP signaling and ultimately a decrease in melanin production in melanocytes.

Its subcellular location is the cell membrane. Functionally, receptor for MSH (alpha, beta and gamma) and ACTH. The activity of this receptor is mediated by G proteins which activate adenylate cyclase. Mediates melanogenesis, the production of eumelanin (black/brown) and phaeomelanin (red/yellow), via regulation of cAMP signaling in melanocytes. This chain is Melanocyte-stimulating hormone receptor (Mc1r), found in Mus musculus (Mouse).